The primary structure comprises 327 residues: Malate dehydrogenase (327 aa).

Residue 11 to 17 (GAAGQIS) coordinates NAD(+). Substrate contacts are provided by arginine 92 and arginine 98. NAD(+) contacts are provided by residues asparagine 105, glutamine 112, and 129-131 (VGN). Residues asparagine 131 and arginine 162 each coordinate substrate. Histidine 187 (proton acceptor) is an active-site residue.

It belongs to the LDH/MDH superfamily. MDH type 2 family.

The enzyme catalyses (S)-malate + NAD(+) = oxaloacetate + NADH + H(+). Its function is as follows. Catalyzes the reversible oxidation of malate to oxaloacetate. The protein is Malate dehydrogenase of Cellvibrio japonicus (strain Ueda107) (Pseudomonas fluorescens subsp. cellulosa).